The following is a 315-amino-acid chain: Fucose-specific lectin (315 aa).

Tandem repeats lie at residues 2-53 (STPG…KNVI), 54-103 (GNAK…GGAK), 104-155 (FQVA…LGGA), 156-207 (LPGT…TIFD), 208-260 (RAPP…ITPV), and 261-315 (IQGS…LPPA). The tract at residues 2–315 (STPGAQQVLF…QLGRSALPPA (314 aa)) is 6 X approximate tandem repeats. Alpha-L-fucose is bound by residues arginine 25, glutamate 37, tryptophan 44, arginine 73, glutamate 85, tryptophan 94, glycine 98, arginine 126, glutamate 138, tryptophan 146, threonine 150, arginine 177, glutamine 189, tryptophan 198, arginine 230, and glutamine 242. Zn(2+)-binding residues include cysteine 244, aspartate 246, and histidine 252. Alpha-L-fucose-binding residues include arginine 282 and glutamate 296.

This sequence belongs to the fungal fucose-specific lectin family. Homodimer.

Functionally, multispecific lectin that is able to recognize L-fucose in all possible linkages. These could be found not only in decomposed plant matter in soil, which is the natural environment for A.fumigatus, but also in various epitopes on human tissues. Mediates binding of A.fumigatus conidia to airway mucin in a fucose dependent manner. Stimulates IL-8 production by human bronchial cells in a dose-dependent manner, contributing to the inflammatory response observed upon the exposure of a patient to A.fumigatus, and thus might be an important virulence factor involved in an early stage of A.fumigatus infection. The sequence is that of Fucose-specific lectin from Aspergillus fumigatus (strain ATCC MYA-4609 / CBS 101355 / FGSC A1100 / Af293) (Neosartorya fumigata).